A 180-amino-acid chain; its full sequence is Translation initiation factor IF-3 (180 aa).

This sequence belongs to the IF-3 family. As to quaternary structure, monomer.

The protein localises to the cytoplasm. In terms of biological role, IF-3 binds to the 30S ribosomal subunit and shifts the equilibrium between 70S ribosomes and their 50S and 30S subunits in favor of the free subunits, thus enhancing the availability of 30S subunits on which protein synthesis initiation begins. This chain is Translation initiation factor IF-3, found in Pectobacterium atrosepticum (strain SCRI 1043 / ATCC BAA-672) (Erwinia carotovora subsp. atroseptica).